Consider the following 382-residue polypeptide: 1-deoxy-D-xylulose 5-phosphate reductoisomerase (382 aa).

Residues Thr-10, Gly-11, Ser-12, Ile-13, Gly-36, and Asn-122 each coordinate NADPH. Lys-123 is a 1-deoxy-D-xylulose 5-phosphate binding site. Residue Glu-124 participates in NADPH binding. Asp-148 is a Mn(2+) binding site. Residues Ser-149, Glu-150, Ser-174, and His-197 each coordinate 1-deoxy-D-xylulose 5-phosphate. Position 150 (Glu-150) interacts with Mn(2+). Gly-203 lines the NADPH pocket. Positions 210, 215, 216, and 219 each coordinate 1-deoxy-D-xylulose 5-phosphate. Glu-219 provides a ligand contact to Mn(2+).

This sequence belongs to the DXR family. The cofactor is Mg(2+). It depends on Mn(2+) as a cofactor.

The catalysed reaction is 2-C-methyl-D-erythritol 4-phosphate + NADP(+) = 1-deoxy-D-xylulose 5-phosphate + NADPH + H(+). Its pathway is isoprenoid biosynthesis; isopentenyl diphosphate biosynthesis via DXP pathway; isopentenyl diphosphate from 1-deoxy-D-xylulose 5-phosphate: step 1/6. Catalyzes the NADPH-dependent rearrangement and reduction of 1-deoxy-D-xylulose-5-phosphate (DXP) to 2-C-methyl-D-erythritol 4-phosphate (MEP). The chain is 1-deoxy-D-xylulose 5-phosphate reductoisomerase from Chlorobium limicola (strain DSM 245 / NBRC 103803 / 6330).